We begin with the raw amino-acid sequence, 239 residues long: Riboflavin synthase (239 aa).

Lumazine-binding repeat units lie at residues 1–105 (MFTG…MGGH) and 106–205 (VVQG…EKQI). Residues 4-6 (GLV), 54-56 (CLT), 70-75 (GISPET), 109-111 (GHV), K145, 154-156 (SLT), and 170-175 (SMVSYT) each bind 2,4-dihydroxypteridine.

Homotrimer.

The enzyme catalyses 2 6,7-dimethyl-8-(1-D-ribityl)lumazine + H(+) = 5-amino-6-(D-ribitylamino)uracil + riboflavin. The protein operates within cofactor biosynthesis; riboflavin biosynthesis; riboflavin from 2-hydroxy-3-oxobutyl phosphate and 5-amino-6-(D-ribitylamino)uracil: step 2/2. Catalyzes the dismutation of two molecules of 6,7-dimethyl-8-ribityllumazine, resulting in the formation of riboflavin and 5-amino-6-(D-ribitylamino)uracil. This chain is Riboflavin synthase (RIB5), found in Meyerozyma guilliermondii (strain ATCC 6260 / CBS 566 / DSM 6381 / JCM 1539 / NBRC 10279 / NRRL Y-324) (Yeast).